The primary structure comprises 550 residues: Chaperonin GroEL (550 aa).

Residues 30–33, Lys-51, 87–91, Gly-415, 480–482, and Asp-496 contribute to the ATP site; these read TLGP, DGTTT, and NAA.

This sequence belongs to the chaperonin (HSP60) family. Forms a cylinder of 14 subunits composed of two heptameric rings stacked back-to-back. Interacts with the co-chaperonin GroES.

The protein resides in the cytoplasm. The enzyme catalyses ATP + H2O + a folded polypeptide = ADP + phosphate + an unfolded polypeptide.. Its function is as follows. Together with its co-chaperonin GroES, plays an essential role in assisting protein folding. The GroEL-GroES system forms a nano-cage that allows encapsulation of the non-native substrate proteins and provides a physical environment optimized to promote and accelerate protein folding. The sequence is that of Chaperonin GroEL from Variovorax paradoxus (strain S110).